The chain runs to 333 residues: Ketol-acid reductoisomerase (NADP(+)) (333 aa).

One can recognise a KARI N-terminal Rossmann domain in the interval 1–171; that stretch reads MSNHTQPKIA…GGARANIIKT (171 aa). NADP(+) is bound by residues 14 to 17, R37, T42, and 72 to 75; these read YGSQ and DMVQ. H97 is a catalytic residue. An NADP(+)-binding site is contributed by G123. One can recognise a KARI C-terminal knotted domain in the interval 172-317; it reads TFKEETETDL…KKLRAKMVWL (146 aa). 4 residues coordinate Mg(2+): D180, E184, E216, and E220. A substrate-binding site is contributed by S241.

Belongs to the ketol-acid reductoisomerase family. It depends on Mg(2+) as a cofactor.

It carries out the reaction (2R)-2,3-dihydroxy-3-methylbutanoate + NADP(+) = (2S)-2-acetolactate + NADPH + H(+). The catalysed reaction is (2R,3R)-2,3-dihydroxy-3-methylpentanoate + NADP(+) = (S)-2-ethyl-2-hydroxy-3-oxobutanoate + NADPH + H(+). Its pathway is amino-acid biosynthesis; L-isoleucine biosynthesis; L-isoleucine from 2-oxobutanoate: step 2/4. It participates in amino-acid biosynthesis; L-valine biosynthesis; L-valine from pyruvate: step 2/4. Its function is as follows. Involved in the biosynthesis of branched-chain amino acids (BCAA). Catalyzes an alkyl-migration followed by a ketol-acid reduction of (S)-2-acetolactate (S2AL) to yield (R)-2,3-dihydroxy-isovalerate. In the isomerase reaction, S2AL is rearranged via a Mg-dependent methyl migration to produce 3-hydroxy-3-methyl-2-ketobutyrate (HMKB). In the reductase reaction, this 2-ketoacid undergoes a metal-dependent reduction by NADPH to yield (R)-2,3-dihydroxy-isovalerate. In Xanthomonas axonopodis pv. citri (strain 306), this protein is Ketol-acid reductoisomerase (NADP(+)).